The primary structure comprises 93 residues: MVKLAKQIVVRGRVQGVGFRWATKMIADNLDISGTIENRSDGSVFIQAAGEPLNLAKFVAKVKAGPNPYANVSTYEEQPLEDVPNFRGFQVTG.

The Acylphosphatase-like domain occupies 5 to 93; it reads AKQIVVRGRV…PNFRGFQVTG (89 aa). Residues R20 and N38 contribute to the active site.

It belongs to the acylphosphatase family.

The enzyme catalyses an acyl phosphate + H2O = a carboxylate + phosphate + H(+). In Lacticaseibacillus paracasei (strain ATCC 334 / BCRC 17002 / CCUG 31169 / CIP 107868 / KCTC 3260 / NRRL B-441) (Lactobacillus paracasei), this protein is Acylphosphatase (acyP).